A 782-amino-acid chain; its full sequence is Translation initiation factor IF-2 (782 aa).

Residues 47-196 form a disordered region; that stretch reads DNAIDGTNKK…TPPKPKELPE (150 aa). Over residues 53-65 the composition is skewed to basic and acidic residues; that stretch reads TNKKAEAPKKETT. Positions 66 to 81 are enriched in polar residues; sequence SNENGNSKGPNKPNMT. Low complexity predominate over residues 82-93; sequence NSNEKSNKPNKP. A compositionally biased stretch (polar residues) spans 115–129; the sequence is KPANTSNQTQSSGNK. Over residues 133 to 170 the composition is skewed to low complexity; sequence GGQKRNNNNNSNRPGGGNPNRPGGNNRPNRGGNFNNKG. Residues 283–452 form the tr-type G domain; the sequence is ERPPVVTIMG…LLVSEVEELK (170 aa). Residues 292 to 299 form a G1 region; that stretch reads GHVDHGKT. Position 292-299 (292-299) interacts with GTP; that stretch reads GHVDHGKT. Positions 317–321 are G2; the sequence is GITQH. Residues 338 to 341 form a G3 region; the sequence is DTPG. GTP contacts are provided by residues 338 to 342 and 392 to 395; these read DTPGH and NKID. The tract at residues 392-395 is G4; sequence NKID. The G5 stretch occupies residues 428 to 430; that stretch reads SAK.

Belongs to the TRAFAC class translation factor GTPase superfamily. Classic translation factor GTPase family. IF-2 subfamily.

The protein localises to the cytoplasm. In terms of biological role, one of the essential components for the initiation of protein synthesis. Protects formylmethionyl-tRNA from spontaneous hydrolysis and promotes its binding to the 30S ribosomal subunits. Also involved in the hydrolysis of GTP during the formation of the 70S ribosomal complex. The protein is Translation initiation factor IF-2 of Listeria innocua serovar 6a (strain ATCC BAA-680 / CLIP 11262).